A 68-amino-acid chain; its full sequence is Large ribosomal subunit protein bL35 (68 aa).

A compositionally biased stretch (basic residues) spans 1-25; it reads MGTKIKTHKGTKKRFRLSAKGKAMH. The segment at 1–43 is disordered; it reads MGTKIKTHKGTKKRFRLSAKGKAMHRQSGTSHLAKGLSKKRRR.

Belongs to the bacterial ribosomal protein bL35 family.

The protein is Large ribosomal subunit protein bL35 of Rhodopirellula baltica (strain DSM 10527 / NCIMB 13988 / SH1).